We begin with the raw amino-acid sequence, 103 residues long: Large ribosomal subunit protein bL21 (103 aa).

This sequence belongs to the bacterial ribosomal protein bL21 family. As to quaternary structure, part of the 50S ribosomal subunit. Contacts protein L20.

Its function is as follows. This protein binds to 23S rRNA in the presence of protein L20. The polypeptide is Large ribosomal subunit protein bL21 (Alteromonas mediterranea (strain DSM 17117 / CIP 110805 / LMG 28347 / Deep ecotype)).